Reading from the N-terminus, the 463-residue chain is Metacaspase-1 (463 aa).

The segment at 1 to 149 (MSWNQYPGGG…PQLQGQGGQS (149 aa)) is disordered. Positions 7-18 (PGGGHHQQGGYG) are enriched in gly residues. The span at 20–56 (RPPPPQWAQQGPPPPPNMGYRPPPPPQAYYNNPPPPQ) shows a compositional bias: pro residues. The span at 57–83 (QYQRPAPQQNGYQQGGYQQQQQSQGNY) shows a compositional bias: low complexity. Catalysis depends on residues His-247 and Cys-309.

The protein belongs to the peptidase C14B family.

Involved in cell death (apoptosis). The chain is Metacaspase-1 (MCA1) from Cryptococcus neoformans var. neoformans serotype D (strain B-3501A) (Filobasidiella neoformans).